Here is a 185-residue protein sequence, read N- to C-terminus: NADH-dependent FMN reductase AsuE2 (185 aa).

The span at 1-13 shows a compositional bias: low complexity; it reads MSTHTARRAGATA. The disordered stretch occupies residues 1-24; it reads MSTHTARRAGATAGHDRDRGTEPG. Positions 14-24 are enriched in basic and acidic residues; it reads GHDRDRGTEPG.

Belongs to the non-flavoprotein flavin reductase family. As to quaternary structure, does not interact with AsuE1, suggesting a possible transient interaction between the two enzymes instead of formation of a stable complex.

The catalysed reaction is FMNH2 + NAD(+) = FMN + NADH + 2 H(+). Its pathway is antibiotic biosynthesis. Functionally, involved in the biosynthesis of the antibiotic asukamycin. When flavin concentration is low, AsuE2 assists the protoasukamycin 4-monooxygenase AsuE1 by providing a reduced form of flavin, enhancing AsuE1 activity. This chain is NADH-dependent FMN reductase AsuE2, found in Streptomyces nodosus subsp. asukaensis.